The primary structure comprises 470 residues: Cytochrome P450 monooxygenase FUM2 (470 aa).

Cysteine 414 contacts heme.

It belongs to the cytochrome P450 family. Heme serves as cofactor.

The protein operates within mycotoxin biosynthesis. Cytochrome P450 monooxygenase; part of the gene cluster that mediates the biosynthesis of fumonisins B1 (FB1), B2 (FB2), B3 (FB3), and B4 (FB4), which are carcinogenic mycotoxins. Within the pathway, FUM2 performs the C-10 hydroxylation present in FB2 and FB4 and which occurs early in the biosynthesis. The biosynthesis starts with the FUM1-catalyzed carbon chain assembly from one molecule of acetyl-CoA, eight molecules of malonyl-CoA, and two molecules of methionine (in S-adenosyl form). The C18 polyketide chain is released from the enzyme by a nucleophilic attack of a carbanion, which is derived from R-carbon of alanine by decarboxylation, on the carbonyl carbon of polyketide acyl chain. This step is catalyzed by the pyridoxal 5'-phosphate-dependent aminoacyl transferase FUM8. The resultant 3-keto intermediate is then stereospecifically reduced to a 3-hydroxyl product by reductase FUM13. Subsequent oxidations at C-10 by the cytochrome P450 monooxygenase FUM2, C-14 and C-15 by FUM6, FUM12 or FUM15, tricarballylic esterification of the hydroxyl groups on C-14 and C-15 by acyltransferase FUM14, and C-5 hydroxylation by 2-keto-glutarate-dependent dioxygenase FUM3 furnish the biosynthesis of fumonisins. The tricarballylic moieties are most likely derived from the citric acid cycle, and their addition to the carbon backbone may involve FUM7, FUM10, FUM11 and FUM14. The polypeptide is Cytochrome P450 monooxygenase FUM2 (Gibberella moniliformis (strain M3125 / FGSC 7600) (Maize ear and stalk rot fungus)).